We begin with the raw amino-acid sequence, 249 residues long: Probable transcriptional regulatory protein Tfu_2096 (249 aa).

Belongs to the TACO1 family.

It is found in the cytoplasm. In Thermobifida fusca (strain YX), this protein is Probable transcriptional regulatory protein Tfu_2096.